The primary structure comprises 1170 residues: Thrombospondin-1 (1170 aa).

A signal peptide spans 1–18 (MELLRGLGVLFLLHMCGS). The tract at residues 47–95 (RLVKGQDLSSPAFRIENANLIPAVPDDKFQDLLDAVWADKGFIFLASLR) is heparin-binding. Positions 56-270 (SPAFRIENAN…HKTKDLQAIC (215 aa)) constitute a Laminin G-like domain. Cys-171 and Cys-232 are oxidised to a cystine. Residues Asn-248 and Asn-360 are each glycosylated (N-linked (GlcNAc...) asparagine). Positions 316–373 (PLCFHNGVQYKNNEEWTVDSCTECHCQNSVTICKKVSCPIMPCSNATVPDGECCPRCW) constitute a VWFC domain. TSP type-1 domains are found at residues 379–429 (DDGW…QECD), 435–490 (DGGW…DACP), and 492–547 (NGGW…QDCP). A glycan (C-linked (Man) tryptophan) is linked at Trp-385. Cystine bridges form between Cys-391–Cys-423, Cys-395–Cys-428, and Cys-406–Cys-413. C-linked (Man) tryptophan glycosylation is found at Trp-438 and Trp-441. Disulfide bonds link Cys-447–Cys-484, Cys-451–Cys-489, and Cys-462–Cys-474. O-linked (Fuc...) threonine glycosylation is present at Thr-450. Trp-498 is a glycosylation site (C-linked (Man) tryptophan). Intrachain disulfides connect Cys-504–Cys-541, Cys-508–Cys-546, Cys-519–Cys-531, Cys-551–Cys-562, Cys-556–Cys-572, Cys-575–Cys-586, Cys-592–Cys-608, Cys-599–Cys-617, Cys-620–Cys-644, Cys-650–Cys-663, Cys-657–Cys-676, Cys-678–Cys-689, Cys-705–Cys-713, Cys-718–Cys-738, Cys-754–Cys-774, Cys-777–Cys-797, Cys-813–Cys-833, Cys-836–Cys-856, Cys-874–Cys-894, Cys-910–Cys-930, and Cys-946–Cys-1167. O-linked (Fuc...) threonine glycosylation occurs at Thr-507. The involved in retention in extracellular matrix (ECM); involved in trimer formation stretch occupies residues 531-1152 (CVGDVTENQV…YAGGRLGLFV (622 aa)). The EGF-like 1 domain maps to 547–587 (PIDGCLSNPCFAGAKCTSYPDGSWKCGACPPGYSGNGIQCK). Ser-553 carries an O-linked (Xyl) serine glycan. Residues 646 to 690 (PRNPCTDGTHDCNKNAKCNYLGHYSDPMYRCECKPGYAGNGIICG) form the EGF-like 2 domain. TSP type-3 repeat units lie at residues 691–726 (EDTD…NSGQ), 727–762 (EDYD…NPAQ), 763–785 (YDYD…NPDQ), 786–821 (ADTD…NVDQ), 822–844 (RDTD…NPDQ), 845–882 (LDSD…NANQ), 883–918 (ADHD…NPDQ), and 919–954 (KDSD…DISE). Asn-708 carries an N-linked (GlcNAc...) asparagine glycan. Residues 840 to 934 (HNPDQLDSDS…GRGDACKDDF (95 aa)) are disordered. Basic and acidic residues-rich tracts occupy residues 883 to 894 (ADHDKDGKGDAC) and 917 to 934 (DQKD…KDDF). The Cell attachment site signature appears at 926 to 928 (RGD). Positions 958 to 1170 (RRFQMIPLDP…SDMKYECRDS (213 aa)) constitute a TSP C-terminal domain. A glycan (N-linked (GlcNAc...) asparagine) is linked at Asn-1067.

This sequence belongs to the thrombospondin family. In terms of assembly, homotrimer; disulfide-linked. Can bind to fibrinogen, fibronectin, laminin, type V collagen and integrins alpha-V/beta-1, alpha-V/beta-3 and alpha-IIb/beta-3. Binds heparin. Interacts (via the C-terminal domain) with CD47. Interacts (via the TSP type I repeats) with CD36; the interaction conveys an antiangiogenic effect. Interacts (via the TSP type I repeats) with HRG; the interaction blocks the antiangiogenic effect of THBS1 with CD36. Interacts with ATF6 (via lumenal domain). Interacts with FN1; this interaction is enhanced by TNFAIP6, which may act as a bridging molecule between FN1 and THBS1. Interacts with SIRPA; the interaction stimulates phosphorylation of SIRPA.

Its subcellular location is the secreted. The protein localises to the cell surface. The protein resides in the extracellular space. It is found in the extracellular matrix. It localises to the endoplasmic reticulum. Its subcellular location is the sarcoplasmic reticulum. Adhesive glycoprotein that mediates cell-to-cell and cell-to-matrix interactions. Multifunctional, involved in inflammation, angiogenesis, wound healing, reactive oxygen species (ROS) signaling, nitrous oxide (NO) signaling, apoptosis, senescence, aging, cellular self-renewal, stemness, and cardiovascular and metabolic homeostasis. Negatively modulates dendritic cell activation and cytokine release, as part of an autocrine feedback loop, contributing to the resolution of inflammation and immune homeostasis. Ligand for receptor CD47. Modulates nitrous oxide (NO) signaling via CD47, hence playing a role as a pressor agent, supporting blood pressure. Plays a role in endothelial cell senescence, acting via CD47, by increasing the abundance and activation of NADPH oxidase NOX1, and so generating excess ROS. Inhibits stem cell self-renewal, acting via CD47 signaling, probably by regulation of the stem cell transcription factors POU5F1/OCT4, SOX2, MYC/c-Myc and KLF4. Negatively modulates wound healing, acting via CD47. Ligand for receptor CD36. Involved in inducing apoptosis in podocytes in response to elevated free fatty acids, acting via CD36. Plays a role in suppressing angiogenesis, acting, depending on context, via CD36 or CD47. Promotes cellular senescence in a TP53-CDKN1A-RB1 signaling-dependent manner. Ligand for immunoglobulin-like cell surface receptor SIRPA. Involved in ROS signaling in non-phagocytic cells, stimulating NADPH oxidase-derived ROS production, acting via interaction with SIRPA. Plays a role in metabolic dysfunction in diet-induced obesity, perhaps acting by exacerbating adipose inflammatory activity; its effects may be mediated, at least in part, through enhanced adipocyte proliferation. Plays a role in ER stress response, via its interaction with the activating transcription factor 6 alpha (ATF6) which produces adaptive ER stress response factors. May be involved in age-related conditions, including metabolic dysregulation, during normal aging. The polypeptide is Thrombospondin-1 (Thbs1) (Mus musculus (Mouse)).